Here is a 78-residue protein sequence, read N- to C-terminus: TP53-regulated inhibitor of apoptosis 1 (78 aa).

Residues 1-52 (MNSVGEECTDMKREYDQCFNRWFAEKFLKGECSGDPCTELFRRYRDCVQKAI) are a coiled coil. One can recognise a CHCH domain in the interval 5 to 55 (GEECTDMKREYDQCFNRWFAEKFLKGECSGDPCTELFRRYRDCVQKAIKDK). 2 short sequence motifs (cx9C motif) span residues 8 to 18 (CTDMKREYDQC) and 37 to 47 (CTELFRRYRDC). Cystine bridges form between cysteine 8–cysteine 47 and cysteine 18–cysteine 37.

This sequence belongs to the TRIAP1/MDM35 family. As to quaternary structure, monomer. Forms a complex with prelid1 in the mitochondrion intermembrane space. Interacts with prelid3a. As to expression, expressed in the developing pronephros.

The protein resides in the mitochondrion. Its subcellular location is the mitochondrion intermembrane space. The catalysed reaction is a 1,2-diacyl-sn-glycero-3-phosphate(in) = a 1,2-diacyl-sn-glycero-3-phosphate(out). In terms of biological role, involved in the modulation of the mitochondrial apoptotic pathway by ensuring the accumulation of cardiolipin (CL) in mitochondrial membranes. The triap1:prelid1 complex probably functions as a phosphatidic acid (PA) transporter across the mitochondrion intermembrane space to provide PA for cardiolipin CL synthesis in the inner membrane. Likewise, the triap1:prelid3a complex mediates the transfer of phosphatidic acid (PA) between liposomes (in vitro) and probably functions as a PA transporter across the mitochondrion intermembrane space (in vivo). Mediates cell survival by inhibiting activation of caspase-9 which prevents induction of apoptosis. Required for pronephros development; probably involved at an early stage in the formation of pronephric components derived from the somatic layer. The protein is TP53-regulated inhibitor of apoptosis 1 of Xenopus tropicalis (Western clawed frog).